The sequence spans 388 residues: Chaperone protein DnaJ (388 aa).

The 66-residue stretch at 4-69 (DYYDILGVDE…EKRQRYDQFG (66 aa)) folds into the J domain. Basic and acidic residues-rich tracts occupy residues 27-50 (KAME…KEAS), 58-73 (DPEK…HDGV), and 113-124 (GRSERGRGRPGS). 2 disordered regions span residues 27 to 86 (KAME…GRGR) and 99 to 125 (SDIF…PGSD). The CR-type zinc-finger motif lies at 140-225 (GTEKNLRLQK…CGGEGRVQGE (86 aa)). Positions 153, 156, 173, 176, 199, 202, 213, and 216 each coordinate Zn(2+). CXXCXGXG motif repeat units follow at residues 153 to 160 (CESCDGTG), 173 to 180 (CPKCDGTG), 199 to 206 (CPRCEGEG), and 213 to 220 (CDDCGGEG). The segment covering 362 to 376 (AHDNFQPRPPEEDTQ) has biased composition (basic and acidic residues). The segment at 362–388 (AHDNFQPRPPEEDTQKSFFRRVSDVFS) is disordered.

It belongs to the DnaJ family. In terms of assembly, homodimer. Requires Zn(2+) as cofactor.

It is found in the cytoplasm. In terms of biological role, participates actively in the response to hyperosmotic and heat shock by preventing the aggregation of stress-denatured proteins and by disaggregating proteins, also in an autonomous, DnaK-independent fashion. Unfolded proteins bind initially to DnaJ; upon interaction with the DnaJ-bound protein, DnaK hydrolyzes its bound ATP, resulting in the formation of a stable complex. GrpE releases ADP from DnaK; ATP binding to DnaK triggers the release of the substrate protein, thus completing the reaction cycle. Several rounds of ATP-dependent interactions between DnaJ, DnaK and GrpE are required for fully efficient folding. Also involved, together with DnaK and GrpE, in the DNA replication of plasmids through activation of initiation proteins. The chain is Chaperone protein DnaJ from Salinibacter ruber (strain DSM 13855 / M31).